Consider the following 335-residue polypeptide: Ubiquinone biosynthesis protein COQ4, mitochondrial (335 aa).

The transit peptide at 1–10 (MLRLSLLRST) directs the protein to the mitochondrion. Residues His210, Asp211, His214, and Glu226 each coordinate Zn(2+).

Belongs to the COQ4 family. Component of a multi-subunit COQ enzyme complex, composed of at least COQ3, COQ4, COQ5, COQ6, COQ7 and COQ9. Interacts with COQ3. The cofactor is Zn(2+).

It localises to the mitochondrion inner membrane. It catalyses the reaction 4-hydroxy-3-methoxy-5-(all-trans-hexaprenyl)benzoate + H(+) = 2-methoxy-6-(all-trans-hexaprenyl)phenol + CO2. Its pathway is cofactor biosynthesis; ubiquinone biosynthesis. Functionally, lyase that catalyzes the C1-decarboxylation of 4-hydroxy-3-methoxy-5-(all-trans-hexaprenyl)benzoic acid into 2-methoxy-6-(all-trans-hexaprenyl)phenol during ubiquinone biosynthesis. The polypeptide is Ubiquinone biosynthesis protein COQ4, mitochondrial (Saccharomyces cerevisiae (strain RM11-1a) (Baker's yeast)).